Consider the following 323-residue polypeptide: Breast cancer metastasis-suppressor 1-like protein-A (323 aa).

Basic and acidic residues predominate over residues 1–15 (MPVHSREKKESNHEE). The segment at 1–52 (MPVHSREKKESNHEEMEVDFAEQEGSSSEDEDTESSSVSEDGESSEMDDEDC) is disordered. Residues 16-51 (MEVDFAEQEGSSSEDEDTESSSVSEDGESSEMDDED) show a composition bias toward acidic residues. 2 coiled-coil regions span residues 50-81 (EDCE…YKER) and 156-178 (QTEL…ITSE).

It belongs to the BRMS1 family.

It is found in the nucleus. In terms of biological role, involved in the histone deacetylase (HDAC1)-dependent transcriptional repression activity. The sequence is that of Breast cancer metastasis-suppressor 1-like protein-A (brms1la) from Danio rerio (Zebrafish).